A 292-amino-acid chain; its full sequence is Expansin-B11 (292 aa).

Residues 1–27 form the signal peptide; it reads MAKSCTLVLLLVALVGLSLLVSPIACS. An N-linked (GlcNAc...) asparagine glycan is attached at Asn51. One can recognise an Expansin-like EG45 domain in the interval 82–192; sequence GGACGYQTAV…RRVPCKYSGV (111 aa). Intrachain disulfides connect Cys85-Cys114, Cys117-Cys187, and Cys122-Cys128. The 83-residue stretch at 205 to 287 folds into the Expansin-like CBD domain; the sequence is FYFEVLIEFE…SWKPGVTYRS (83 aa).

Belongs to the expansin family. Expansin B subfamily. Expressed in internodes.

Its subcellular location is the secreted. It is found in the cell wall. The protein localises to the membrane. Functionally, may cause loosening and extension of plant cell walls by disrupting non-covalent bonding between cellulose microfibrils and matrix glucans. No enzymatic activity has been found. May be required for rapid internodal elongation in deepwater rice during submergence. In Oryza sativa subsp. japonica (Rice), this protein is Expansin-B11 (EXPB11).